We begin with the raw amino-acid sequence, 773 residues long: MRLLLCLLLFSTLLINSTNACPGVITQACFCSEVHSGIVLDCSNSSASGILQIIRTNQAQVGLIQSLTMNQAELVELPPNFFSGLFIRRLDLSQNKIKKIDDAAFAGINPVLEEVVLNHNLIEKVPAAALAGLPNLLRLDLSNNSIVEIQEQEIFPNLNKLYDINLGSNKIFSIHTSTFQNVKNSIQTINLGHNNMTAVPSSAIRGLKQLQSLHLHKNRIEQLDALNFLNLPVLNLLNLAGNQIHELNRQAFLNVPSLRYLYLSGNKITKLTAYQFQTFEQLEMLDLTNNEIGAIPANSLSGLKQLRQLYLAHNKISNISSNAFTNSSIVVLVLSSNELKTLTAGIISGLPNLQQVSFRDNQIKTINRNAFYDAASLVMLDLAKNQLTEIAPTTFLAQLNLLLVDLSENKLPKTPYSAFNSRVGTVLLKENPLVCTENLHMLQQGTGVYVRDSPDIICGRKPTPKPEPVLVPIVTDSLISTQRPALVQIPKMQIHRNVHTTTGDQAPQIPSGAFQQIDLGKSRSLPRGHSRFILDKPSTREQSVEPTEELTPIQPIILPSREDEIRQSSMEAGTSQESVEATSQKIPSTTDIIDRPNVVLPFPVPFLKRGPNLSESKKVESTDMPSTSQVFHTLPPSILIEPGSTPKVAQPSTEANIKSEHIDEFALASSNSNEPTLQPRLEKSFFTTTIIFICVGTAVIVLVVVIAGLCISKHRQLQFENTYSDSSAARTSEYISTQYRQNSLRGTGGRVGRFEESPAWIYNPGSSYCNYYK.

A signal peptide spans 1–20 (MRLLLCLLLFSTLLINSTNA). Residues 21 to 689 (CPGVITQACF…RLEKSFFTTT (669 aa)) are Extracellular-facing. LRR repeat units follow at residues 61–84 (VGLI…FFSG), 85–107 (LFIR…AFAG), 109–132 (NPVL…ALAG), 133–157 (LPNL…IFPN), 159–181 (NKLY…TFQN), 183–206 (KNSI…AIRG), 207–230 (LKQL…NFLN), 231–254 (LPVL…AFLN), 256–278 (PSLR…QFQT), 279–302 (FEQL…SLSG), 303–326 (LKQL…AFTN), 328–349 (SIVV…IISG), 350–373 (LPNL…AFYD), 375–397 (ASLV…TFLA), 399–421 (LNLL…AFNS), and 486–516 (LVQI…AFQQ). Residues 690–710 (IIFICVGTAVIVLVVVIAGLC) traverse the membrane as a helical segment. The Cytoplasmic portion of the chain corresponds to 711–773 (ISKHRQLQFE…PGSSYCNYYK (63 aa)).

As to expression, in L1 larvae, expressed in a subset of epithelial cells including epidermal, vulval and rectal cells and the excretory duct and pore. Absent from internal epithelia such as the gut and pharyngeal tubes. Transiently expressed in the excretory canal cell at the 1.5-fold embryonic stage but no longer visible in this cell at hatching.

Its subcellular location is the apical cell membrane. Functionally, required for apical extracellular matrix organization and epithelial junction maintenance. The protein is Leucine-rich repeat-containing protein let-4 (let-4) of Caenorhabditis elegans.